The sequence spans 525 residues: cAMP-dependent protein kinase regulatory subunit (525 aa).

The interval 28–213 (QFCANWFNSK…RIRGSIGNNL (186 aa)) is dimerization and phosphorylation. Disordered regions lie at residues 114–146 (MDASQSPDSTPAPATPAAPAAPAAPAAPFSSLG) and 170–196 (SVSAESMAPSAANAESDGSPLPKTVIP). A compositionally biased stretch (low complexity) spans 124–146 (PAPATPAAPAAPAAPAAPFSSLG). Serine 170 carries the post-translational modification Phosphoserine; by autocatalysis. Residues 214-345 (LFRN…FLMD) and 348-472 (LFER…TYGD) contribute to the a nucleoside 3',5'-cyclic phosphate site. 3',5'-cyclic AMP contacts are provided by glutamate 295, arginine 304, and glutamate 417. A disordered region spans residues 497 to 525 (SGADTSFPHPMDSSAKPGEGAWSAPNPFA).

This sequence belongs to the cAMP-dependent kinase regulatory chain family. Tetramer, composed of 2 regulatory (R) and 2 catalytic (C) subunits. In the presence of cAMP it dissociates into 2 active monomeric C subunits and an R dimer.

The protein is cAMP-dependent protein kinase regulatory subunit (PKAR) of Mycosarcoma maydis (Corn smut fungus).